The sequence spans 324 residues: D-alanine--D-alanine ligase (324 aa).

In terms of domain architecture, ATP-grasp spans asparagine 121–glutamate 321. Residue valine 149–threonine 204 coordinates ATP. 3 residues coordinate Mg(2+): aspartate 275, glutamate 288, and asparagine 290.

This sequence belongs to the D-alanine--D-alanine ligase family. Requires Mg(2+) as cofactor. The cofactor is Mn(2+).

It is found in the cytoplasm. It carries out the reaction 2 D-alanine + ATP = D-alanyl-D-alanine + ADP + phosphate + H(+). The protein operates within cell wall biogenesis; peptidoglycan biosynthesis. In terms of biological role, cell wall formation. This Bacteroides fragilis (strain ATCC 25285 / DSM 2151 / CCUG 4856 / JCM 11019 / LMG 10263 / NCTC 9343 / Onslow / VPI 2553 / EN-2) protein is D-alanine--D-alanine ligase.